The sequence spans 883 residues: Aldehyde-alcohol dehydrogenase (883 aa).

The segment at 13–456 (KLVAEKHVDE…DNVSAINLLN (444 aa)) is aldehyde dehydrogenase. NAD(+) contacts are provided by residues 121–126 (ITPTTN), Gly-206, and Gly-224. Cys-257 acts as the Nucleophile in catalysis. NAD(+) is bound by residues Glu-355, Leu-435, and 438–443 (GSYGRN). The interval 457 to 464 (IKKVGRRR) is linker. Residues Asp-500, Asp-534, 561–565 (GSPMD), 612–613 (TT), Val-625, Lys-634, and Leu-653 each bind NAD(+). Fe cation is bound by residues Asp-668, His-672, His-736, and His-750.

In the N-terminal section; belongs to the aldehyde dehydrogenase family. It in the C-terminal section; belongs to the iron-containing alcohol dehydrogenase family. Fe(2+) is required as a cofactor.

It carries out the reaction an aldehyde + NAD(+) + H2O = a carboxylate + NADH + 2 H(+). The catalysed reaction is ethanol + NAD(+) = acetaldehyde + NADH + H(+). Its function is as follows. Has alcohol dehydrogenase activity. Has aldehyde dehydrogenase activity. Plays a role in enhancing virulence in mice, under ethanol stress conditions, perhaps by inducing expression of pneumolysin (Ply) and increasing production of hydrogen peroxide H(2)O(2). May be considered a potential virulence factor. The polypeptide is Aldehyde-alcohol dehydrogenase (Streptococcus pneumoniae serotype 2 (strain D39 / NCTC 7466)).